A 435-amino-acid chain; its full sequence is Origin recognition complex subunit 5 (435 aa).

37–44 contributes to the ATP binding site; the sequence is GHTASGKT.

Belongs to the ORC5 family. As to quaternary structure, component of ORC, a complex composed of at least 6 subunits: ORC1, ORC2, ORC3, ORC4, ORC5 and ORC6. ORC is regulated in a cell-cycle dependent manner. It is sequentially assembled at the exit from anaphase of mitosis and disassembled as cells enter S phase. Post-translationally, multi-mono-ubiquitinated by OBI1; ubiquitination is important for efficient DNA replication origin site activation. Ubiquitination levels are low in mitotic and early G1-phAse cells and are induced in late G1-/early S-phase, peaking in S-phase and decrease toward the end of the cell cycle. In terms of tissue distribution, abundant in spleen, ovary, prostate, testis, and colon mucosa.

The protein localises to the nucleus. Its subcellular location is the chromosome. Functionally, component of the origin recognition complex (ORC) that binds origins of replication. DNA-binding is ATP-dependent. The specific DNA sequences that define origins of replication have not been identified yet. ORC is required to assemble the pre-replication complex necessary to initiate DNA replication. This is Origin recognition complex subunit 5 (ORC5) from Homo sapiens (Human).